We begin with the raw amino-acid sequence, 100 residues long: Aspartyl/glutamyl-tRNA(Asn/Gln) amidotransferase subunit C (100 aa).

This sequence belongs to the GatC family. As to quaternary structure, heterotrimer of A, B and C subunits.

The enzyme catalyses L-glutamyl-tRNA(Gln) + L-glutamine + ATP + H2O = L-glutaminyl-tRNA(Gln) + L-glutamate + ADP + phosphate + H(+). It catalyses the reaction L-aspartyl-tRNA(Asn) + L-glutamine + ATP + H2O = L-asparaginyl-tRNA(Asn) + L-glutamate + ADP + phosphate + 2 H(+). Functionally, allows the formation of correctly charged Asn-tRNA(Asn) or Gln-tRNA(Gln) through the transamidation of misacylated Asp-tRNA(Asn) or Glu-tRNA(Gln) in organisms which lack either or both of asparaginyl-tRNA or glutaminyl-tRNA synthetases. The reaction takes place in the presence of glutamine and ATP through an activated phospho-Asp-tRNA(Asn) or phospho-Glu-tRNA(Gln). This chain is Aspartyl/glutamyl-tRNA(Asn/Gln) amidotransferase subunit C, found in Streptococcus pyogenes serotype M49 (strain NZ131).